Here is a 609-residue protein sequence, read N- to C-terminus: Glutamine--fructose-6-phosphate aminotransferase [isomerizing] (609 aa).

Cys-2 functions as the Nucleophile; for GATase activity in the catalytic mechanism. Residues 2-219 enclose the Glutamine amidotransferase type-2 domain; the sequence is CGIVAAVTQR…EGDIAIVARK (218 aa). 2 SIS domains span residues 288 to 428 and 460 to 599; these read ENNI…SKKE and MANT…IDQP. Lys-604 (for Fru-6P isomerization activity) is an active-site residue.

As to quaternary structure, homodimer.

The protein resides in the cytoplasm. It carries out the reaction D-fructose 6-phosphate + L-glutamine = D-glucosamine 6-phosphate + L-glutamate. Catalyzes the first step in hexosamine metabolism, converting fructose-6P into glucosamine-6P using glutamine as a nitrogen source. This chain is Glutamine--fructose-6-phosphate aminotransferase [isomerizing], found in Buchnera aphidicola subsp. Acyrthosiphon pisum (strain APS) (Acyrthosiphon pisum symbiotic bacterium).